Here is a 467-residue protein sequence, read N- to C-terminus: Hydroxyacid-oxoacid transhydrogenase, mitochondrial (467 aa).

An N6-acetyllysine modification is found at K445. The residue at position 452 (S452) is a Phosphoserine.

Belongs to the iron-containing alcohol dehydrogenase family. Hydroxyacid-oxoacid transhydrogenase subfamily. In terms of tissue distribution, expressed in kidney and liver.

It localises to the mitochondrion. The enzyme catalyses (S)-3-hydroxybutanoate + 2-oxoglutarate = (R)-2-hydroxyglutarate + acetoacetate. It carries out the reaction 4-hydroxybutanoate + 2-oxoglutarate = (R)-2-hydroxyglutarate + succinate semialdehyde. Functionally, catalyzes the cofactor-independent reversible oxidation of gamma-hydroxybutyrate (GHB) to succinic semialdehyde (SSA) coupled to reduction of 2-ketoglutarate (2-KG) to D-2-hydroxyglutarate (D-2-HG). L-3-hydroxybutyrate (L-3-OHB) is also a substrate for HOT when using 2-KG as hydrogen acceptor, resulting in the formation of D-2-HG. The chain is Hydroxyacid-oxoacid transhydrogenase, mitochondrial (Adhfe1) from Rattus norvegicus (Rat).